The following is a 250-amino-acid chain: Ribosomal RNA small subunit methyltransferase J (250 aa).

Residues 101–102 (RD), 117–118 (ER), 153–154 (SS), and Asp171 each bind S-adenosyl-L-methionine.

This sequence belongs to the methyltransferase superfamily. RsmJ family.

It localises to the cytoplasm. It catalyses the reaction guanosine(1516) in 16S rRNA + S-adenosyl-L-methionine = N(2)-methylguanosine(1516) in 16S rRNA + S-adenosyl-L-homocysteine + H(+). Its function is as follows. Specifically methylates the guanosine in position 1516 of 16S rRNA. In Escherichia coli O81 (strain ED1a), this protein is Ribosomal RNA small subunit methyltransferase J.